Here is a 299-residue protein sequence, read N- to C-terminus: Nucleotide-binding protein DIP1313 (299 aa).

Residue 22 to 29 coordinates ATP; the sequence is GLSGAGLS. 73–76 contributes to the GTP binding site; sequence DVRS.

This sequence belongs to the RapZ-like family.

Its function is as follows. Displays ATPase and GTPase activities. This is Nucleotide-binding protein DIP1313 from Corynebacterium diphtheriae (strain ATCC 700971 / NCTC 13129 / Biotype gravis).